We begin with the raw amino-acid sequence, 183 residues long: MYVKVNPSSYSVAIYEIAKESNKIKTFHEQFSFVKKVIEKNPQLITFLKNDEIALEKRFELIDEIFGSLEVDVKNSIKVALVRNMIFVLRKIIVDFLKITNYELGIKFAKVITAYPLSDSELEKIQKKLNEKTKKIVEISTEVDEKLLSGYKIIFSNQLYERNYNNDLQKIKKTIIKGKEDEK.

Belongs to the ATPase delta chain family. In terms of assembly, F-type ATPases have 2 components, F(1) - the catalytic core - and F(0) - the membrane proton channel. F(1) has five subunits: alpha(3), beta(3), gamma(1), delta(1), epsilon(1). F(0) has three main subunits: a(1), b(2) and c(10-14). The alpha and beta chains form an alternating ring which encloses part of the gamma chain. F(1) is attached to F(0) by a central stalk formed by the gamma and epsilon chains, while a peripheral stalk is formed by the delta and b chains.

It localises to the cell membrane. Functionally, f(1)F(0) ATP synthase produces ATP from ADP in the presence of a proton or sodium gradient. F-type ATPases consist of two structural domains, F(1) containing the extramembraneous catalytic core and F(0) containing the membrane proton channel, linked together by a central stalk and a peripheral stalk. During catalysis, ATP synthesis in the catalytic domain of F(1) is coupled via a rotary mechanism of the central stalk subunits to proton translocation. In terms of biological role, this protein is part of the stalk that links CF(0) to CF(1). It either transmits conformational changes from CF(0) to CF(1) or is implicated in proton conduction. This Mycoplasmopsis synoviae (strain 53) (Mycoplasma synoviae) protein is ATP synthase subunit delta.